A 219-amino-acid chain; its full sequence is 7-cyano-7-deazaguanine synthase (219 aa).

ATP is bound at residue 10–20 (FSGGQDSTTCL). 4 residues coordinate Zn(2+): Cys-188, Cys-197, Cys-200, and Cys-203.

The protein belongs to the QueC family. In terms of assembly, homodimer. Zn(2+) serves as cofactor.

The enzyme catalyses 7-carboxy-7-deazaguanine + NH4(+) + ATP = 7-cyano-7-deazaguanine + ADP + phosphate + H2O + H(+). The protein operates within purine metabolism; 7-cyano-7-deazaguanine biosynthesis. Catalyzes the ATP-dependent conversion of 7-carboxy-7-deazaguanine (CDG) to 7-cyano-7-deazaguanine (preQ(0)). The chain is 7-cyano-7-deazaguanine synthase from Clostridium botulinum (strain ATCC 19397 / Type A).